Here is a 63-residue protein sequence, read N- to C-terminus: Cytochrome c oxidase subunit 5C (63 aa).

A helical transmembrane segment spans residues 16–34; it reads VVKEIFIGLTLGLVAGGMW.

Belongs to the cytochrome c oxidase subunit 5C family.

The protein localises to the mitochondrion inner membrane. In terms of biological role, this protein is one of the nuclear-coded polypeptide chains of cytochrome c oxidase, the terminal oxidase in mitochondrial electron transport. This is Cytochrome c oxidase subunit 5C (COX5C) from Hordeum vulgare (Barley).